A 122-amino-acid chain; its full sequence is Vitelline membrane protein Vm32E (122 aa).

The first 19 residues, 1–19 (MKTVAFLAVVVLFAAFACA), serve as a signal peptide directing secretion. A VM domain is found at 40-79 (SVPAPPCPKNYLFSCQPNLVPAPCAQQAAPAAYGSAGAYT).

It belongs to the vitelline membrane family.

The protein localises to the secreted. In terms of biological role, major early eggshell protein. This Drosophila persimilis (Fruit fly) protein is Vitelline membrane protein Vm32E.